The sequence spans 343 residues: Biotin synthase 2 (343 aa).

The Radical SAM core domain occupies 58–285; sequence NEVQLSTLLS…LTMVRLSAGR (228 aa). 3 residues coordinate [4Fe-4S] cluster: Cys73, Cys77, and Cys80. Positions 117, 148, 208, and 280 each coordinate [2Fe-2S] cluster.

This sequence belongs to the radical SAM superfamily. Biotin synthase family. Homodimer. [4Fe-4S] cluster serves as cofactor. Requires [2Fe-2S] cluster as cofactor.

The catalysed reaction is (4R,5S)-dethiobiotin + (sulfur carrier)-SH + 2 reduced [2Fe-2S]-[ferredoxin] + 2 S-adenosyl-L-methionine = (sulfur carrier)-H + biotin + 2 5'-deoxyadenosine + 2 L-methionine + 2 oxidized [2Fe-2S]-[ferredoxin]. It functions in the pathway cofactor biosynthesis; biotin biosynthesis; biotin from 7,8-diaminononanoate: step 2/2. Catalyzes the conversion of dethiobiotin (DTB) to biotin by the insertion of a sulfur atom into dethiobiotin via a radical-based mechanism. In Polaromonas sp. (strain JS666 / ATCC BAA-500), this protein is Biotin synthase 2.